The sequence spans 407 residues: uncharacterized protein (407 aa).

Lys22 participates in a covalent cross-link: Glycyl lysine isopeptide (Lys-Gly) (interchain with G-Cter in ubiquitin).

Belongs to the SVF1 family.

It localises to the cytoplasm. This is an uncharacterized protein from Saccharomyces cerevisiae (strain ATCC 204508 / S288c) (Baker's yeast).